The sequence spans 1255 residues: TBC1 domain family member 1 (1255 aa).

S146 bears the Phosphoserine mark. Residues 208-228 (RTDWEAPTGQPSAPGPRPMRK) are disordered. A Phosphoserine; by PKB/AKT1 modification is found at S229. S231 bears the Phosphoserine; by AMPK mark. The PID domain maps to 238–398 (LAFRKEFQDA…LHKLCERIEG (161 aa)). Phosphoserine; by PKB/AKT1 is present on S489. Phosphoserine is present on S497. Position 499 is a phosphothreonine; by PKB/AKT1 (T499). Phosphoserine is present on residues S501, S519, S521, S559, S560, S564, S565, and S579. 2 disordered regions span residues 509 to 544 (GNKARGLQDHSASVDLDSSTSSTLSNTSKELSMGDK) and 559 to 581 (SSDDLSSDSEGHIAEESALLSPQ). The segment covering 519–539 (SASVDLDSSTSSTLSNTSKEL) has biased composition (low complexity). At T590 the chain carries Phosphothreonine. Disordered stretches follow at residues 595–614 (PVECPAPPEPAQSSPGVSQR) and 621–681 (SVST…GNAV). S608 is subject to Phosphoserine. At S621 the chain carries Phosphoserine; by PKB/AKT1. Phosphoserine occurs at positions 660 and 661. The segment covering 670-679 (HNSSGEQSGN) has biased composition (polar residues). At S697 the chain carries Phosphoserine; by PKB/AKT1. Phosphoserine occurs at positions 698 and 699. At S700 the chain carries Phosphoserine; by AMPK. Positions 764–786 (DSPSRYEDYSELGELPPRSPLEP) are disordered. 2 positions are modified to phosphoserine: S782 and S1028. Positions 887 to 1081 (GVPRHHRGEI…RVFDMIFLQG (195 aa)) constitute a Rab-GAP TBC domain. A Phosphotyrosine modification is found at Y1039. T1218 is modified (phosphothreonine). The tract at residues 1233-1255 (LRRQSARPSTPEPDCTQLEPTGD) is disordered.

Interacts with APPL2 (via BAR domain); interaction is dependent of TBC1D1 phosphorylation at Ser-229; interaction diminishes the phosphorylation of TBC1D1 at Thr-590, resulting in inhibition of SLC2A4/GLUT4 translocation and glucose uptake. Post-translationally, insulin-stimulated phosphorylation by AKT family kinases stimulates SLC2A4/GLUT4 translocation. As to expression, expressed in highest levels in hematopoietic cells, testis and kidney.

The protein localises to the nucleus. May act as a GTPase-activating protein for Rab family protein(s). May play a role in the cell cycle and differentiation of various tissues. Involved in the trafficking and translocation of GLUT4-containing vesicles and insulin-stimulated glucose uptake into cells. This chain is TBC1 domain family member 1 (Tbc1d1), found in Mus musculus (Mouse).